The sequence spans 324 residues: Alkanal monooxygenase beta chain (324 aa).

The protein belongs to the bacterial luciferase oxidoreductase family. In terms of assembly, heterodimer of an alpha and a beta chain.

It carries out the reaction a long-chain fatty aldehyde + FMNH2 + O2 = a long-chain fatty acid + hnu + FMN + H2O + 2 H(+). In terms of biological role, light-emitting reaction in luminous bacteria. The specific role of the beta subunit is unknown, but it is absolutely required for bioluminescence activity. This chain is Alkanal monooxygenase beta chain (luxB), found in Photorhabdus luminescens (Xenorhabdus luminescens).